The chain runs to 326 residues: Zinc finger CCCH domain-containing protein 15 (326 aa).

A compositionally biased stretch (gly residues) spans 1 to 14 (MADGGGGGEAGSGG). Residues 1–142 (MADGGGGGEA…SSSGSGSGEV (142 aa)) form a disordered region. Residues 24-33 (KPPKNIRKRP) are compositionally biased toward basic residues. A compositionally biased stretch (low complexity) spans 47 to 64 (SGAIAAARAKKAPSSTSK). Residues 81–100 (YESSRTIQASTDSRATATLE) are compositionally biased toward polar residues. The segment covering 104-125 (EFDRDARAIRERQLKQAEESLK) has biased composition (basic and acidic residues). The segment at 187-215 (DYQPDICKDYKETGYCGYGDSCKFMHDRG) adopts a C3H1-type zinc-finger fold. Residues 265 to 303 (CYICREPFVDPVVTKCKHYFCEHCALKHHSKNKKCFVCN) form an RING-type zinc finger.

The chain is Zinc finger CCCH domain-containing protein 15 from Oryza sativa subsp. japonica (Rice).